Reading from the N-terminus, the 297-residue chain is Glycerol-3-phosphate dehydrogenase [NAD(P)+] (297 aa).

Positions 11, 33, and 79 each coordinate NADPH. Sn-glycerol 3-phosphate-binding residues include K79, G107, and S109. A111 provides a ligand contact to NADPH. 5 residues coordinate sn-glycerol 3-phosphate: K161, D214, S224, R225, and N226. Catalysis depends on K161, which acts as the Proton acceptor. R225 serves as a coordination point for NADPH. NADPH contacts are provided by V249 and E251.

It belongs to the NAD-dependent glycerol-3-phosphate dehydrogenase family.

It is found in the cytoplasm. The catalysed reaction is sn-glycerol 3-phosphate + NAD(+) = dihydroxyacetone phosphate + NADH + H(+). It catalyses the reaction sn-glycerol 3-phosphate + NADP(+) = dihydroxyacetone phosphate + NADPH + H(+). It functions in the pathway membrane lipid metabolism; glycerophospholipid metabolism. Functionally, catalyzes the reduction of the glycolytic intermediate dihydroxyacetone phosphate (DHAP) to sn-glycerol 3-phosphate (G3P), the key precursor for phospholipid synthesis. This is Glycerol-3-phosphate dehydrogenase [NAD(P)+] from Campylobacter jejuni subsp. jejuni serotype O:2 (strain ATCC 700819 / NCTC 11168).